The sequence spans 348 residues: Rhodopsin (348 aa).

Residues 1–33 (TEGPYFYVPMVNTTGIVRSPYEYPQYYLVNPAA) are Extracellular-facing. A glycan (N-linked (GlcNAc...) asparagine) is linked at Asn12. A helical transmembrane segment spans residues 34–58 (YAVLGAYMFFLIILGFPINFLTLYV). Residues 59 to 70 (TLEHKKLRTPLN) are Cytoplasmic-facing. A helical transmembrane segment spans residues 71–93 (YILLNLAVADLFMVIGGFTTTMY). Residues 94–107 (SSMHGYFVLGRLGC) are Extracellular-facing. Cys107 and Cys184 form a disulfide bridge. The helical transmembrane segment at 108-130 (NLEGFSATLGGMISLWSLAVLAI) threads the bilayer. Positions 131–133 (ERW) match the 'Ionic lock' involved in activated form stabilization motif. Residues 131 to 149 (ERWVVVCKPISNFRFGENH) lie on the Cytoplasmic side of the membrane. Residues 150 to 170 (AIMGVSLTWTMALACTVPPLV) traverse the membrane as a helical segment. Residues 171 to 199 (GWSRYIPEGMQCSCGIDYYTRAEGFNNES) lie on the Extracellular side of the membrane. Asn197 carries an N-linked (GlcNAc...) asparagine glycan. A helical membrane pass occupies residues 200–221 (FVLYMFFCHFMVPLIIIFFCYG). At 222–249 (RLLCAVKEAAAAQQESETTQRAEREVTR) the chain is on the cytoplasmic side. The helical transmembrane segment at 250–271 (MVILMVIGYLVCWLPYASVAWF) threads the bilayer. At 272-283 (IFTHQGSEFGPL) the chain is on the extracellular side. The helical transmembrane segment at 284-305 (FMTIPAFFAKSSSIYNPVIYIC) threads the bilayer. Lys293 carries the post-translational modification N6-(retinylidene)lysine. The Cytoplasmic segment spans residues 306 to 348 (MNKQFRNCMITTLFCGKNPFEGEEEGASSTKTEASSASSVSPA). Cys320 is lipidated: S-palmitoyl cysteine. The tract at residues 327-348 (GEEEGASSTKTEASSASSVSPA) is disordered. The span at 332–348 (ASSTKTEASSASSVSPA) shows a compositional bias: low complexity.

This sequence belongs to the G-protein coupled receptor 1 family. Opsin subfamily. Phosphorylated on some or all of the serine and threonine residues present in the C-terminal region. In terms of processing, contains one covalently linked retinal chromophore.

The protein localises to the membrane. Its subcellular location is the cell projection. The protein resides in the cilium. It is found in the photoreceptor outer segment. Photoreceptor required for image-forming vision at low light intensity. While most salt water fish species use retinal as chromophore, most freshwater fish use 3-dehydroretinal, or a mixture of retinal and 3-dehydroretinal. Light-induced isomerization of 11-cis to all-trans retinal triggers a conformational change that activates signaling via G-proteins. Subsequent receptor phosphorylation mediates displacement of the bound G-protein alpha subunit by arrestin and terminates signaling. In Neoniphon argenteus (Clearfin squirrelfish), this protein is Rhodopsin (rho).